The sequence spans 388 residues: Staphopain A (388 aa).

Residues 1–25 form the signal peptide; sequence MKRNFPKLIALSLIFSLSVTPIANA. A propeptide spanning residues 26 to 214 is cleaved from the precursor; it reads ESNSNIKAKD…TSQFKSNNYT (189 aa). Active-site residues include cysteine 238, histidine 334, and asparagine 355.

This sequence belongs to the peptidase C47 family. In terms of assembly, in the cytoplasm, prematurely activated/folded ScpA forms a stable non-covalent complex with ScpB. Cleavage leads to the activation of ScpA probably by an auto-catalytic manner.

It localises to the secreted. The catalysed reaction is Broad endopeptidase action on proteins including elastin, but rather limited hydrolysis of small-molecule substrates. Assays are conveniently made with hemoglobin, casein or Z-Phe-Arg-NHMec as substrate.. Prematurely activated/folded staphopain A is inhibited by staphostatin A (ScpB), which is probably required to protect staphylococcal cytoplasmic proteins from degradation by ScpA. Functionally, cysteine protease that plays an important role in the inhibition of host innate immune response. Cleaves host elastins found in connective tissues, pulmonary surfactant protein A in the lungs, and the chemokine receptor CXCR2 on leukocytes. Proteolytic cleavage of surfactant protein A impairs bacterial phagocytosis by neutrophils while CXCR2 degradation blocks neutrophil activation and chemotaxis. Additionally, promotes vascular leakage by activating the plasma kallikerin/kinin system, resulting in hypotension. The sequence is that of Staphopain A (sspP) from Staphylococcus aureus (strain Mu50 / ATCC 700699).